A 287-amino-acid polypeptide reads, in one-letter code: Hydroxyethylthiazole kinase (287 aa).

M50 contributes to the substrate binding site. Residues R126 and S185 each contribute to the ATP site. G212 lines the substrate pocket.

Belongs to the Thz kinase family. The cofactor is Mg(2+).

It catalyses the reaction 5-(2-hydroxyethyl)-4-methylthiazole + ATP = 4-methyl-5-(2-phosphooxyethyl)-thiazole + ADP + H(+). It functions in the pathway cofactor biosynthesis; thiamine diphosphate biosynthesis; 4-methyl-5-(2-phosphoethyl)-thiazole from 5-(2-hydroxyethyl)-4-methylthiazole: step 1/1. In terms of biological role, catalyzes the phosphorylation of the hydroxyl group of 4-methyl-5-beta-hydroxyethylthiazole (THZ). The polypeptide is Hydroxyethylthiazole kinase (Methanobrevibacter smithii (strain ATCC 35061 / DSM 861 / OCM 144 / PS)).